Consider the following 20-residue polypeptide: Short cationic peptide-4b (20 aa).

Residue glutamate 20 is modified to Glutamic acid 1-amide.

Expressed by the venom gland.

It is found in the secreted. The protein is Short cationic peptide-4b of Cupiennius salei (American wandering spider).